The sequence spans 211 residues: Thiamine-phosphate synthase (211 aa).

4-amino-2-methyl-5-(diphosphooxymethyl)pyrimidine contacts are provided by residues 37 to 41 (QLRIK) and Asn69. Residues Asp70 and Asp89 each contribute to the Mg(2+) site. Ser108 provides a ligand contact to 4-amino-2-methyl-5-(diphosphooxymethyl)pyrimidine. Position 134 to 136 (134 to 136 (TQT)) interacts with 2-[(2R,5Z)-2-carboxy-4-methylthiazol-5(2H)-ylidene]ethyl phosphate. Lys137 provides a ligand contact to 4-amino-2-methyl-5-(diphosphooxymethyl)pyrimidine. 2-[(2R,5Z)-2-carboxy-4-methylthiazol-5(2H)-ylidene]ethyl phosphate is bound by residues Gly166 and 186-187 (VS).

It belongs to the thiamine-phosphate synthase family. Requires Mg(2+) as cofactor.

It catalyses the reaction 2-[(2R,5Z)-2-carboxy-4-methylthiazol-5(2H)-ylidene]ethyl phosphate + 4-amino-2-methyl-5-(diphosphooxymethyl)pyrimidine + 2 H(+) = thiamine phosphate + CO2 + diphosphate. The catalysed reaction is 2-(2-carboxy-4-methylthiazol-5-yl)ethyl phosphate + 4-amino-2-methyl-5-(diphosphooxymethyl)pyrimidine + 2 H(+) = thiamine phosphate + CO2 + diphosphate. It carries out the reaction 4-methyl-5-(2-phosphooxyethyl)-thiazole + 4-amino-2-methyl-5-(diphosphooxymethyl)pyrimidine + H(+) = thiamine phosphate + diphosphate. It participates in cofactor biosynthesis; thiamine diphosphate biosynthesis; thiamine phosphate from 4-amino-2-methyl-5-diphosphomethylpyrimidine and 4-methyl-5-(2-phosphoethyl)-thiazole: step 1/1. Functionally, condenses 4-methyl-5-(beta-hydroxyethyl)thiazole monophosphate (THZ-P) and 2-methyl-4-amino-5-hydroxymethyl pyrimidine pyrophosphate (HMP-PP) to form thiamine monophosphate (TMP). This chain is Thiamine-phosphate synthase, found in Salmonella agona (strain SL483).